Here is a 1235-residue protein sequence, read N- to C-terminus: JNK-interacting protein 3 (1235 aa).

The tract at residues 1-22 (MMDNDDALLNNGGPQSGAETVY) is disordered. The RH1 domain maps to 25-113 (EDNNMVMSEK…VTQYEREKSA (89 aa)). Residues 84-184 (RINQEQDVEL…NKLHERYTEL (101 aa)) are a coiled coil. The disordered stretch occupies residues 278–325 (GAATDSLQQQHQATSPQSPPDTSPVVPNVPPANVGRSTTKKEQRSDNN). Over residues 282-293 (DSLQQQHQATSP) the composition is skewed to polar residues. The span at 294–307 (QSPPDTSPVVPNVP) shows a compositional bias: pro residues. Residues 366-493 (GKEVENLIME…AVRLTEILRA (128 aa)) adopt a coiled-coil conformation. Residues 456 to 526 (RKRFTRVEMA…TPSNRPTERI (71 aa)) enclose the RH2 domain. Disordered regions lie at residues 520 to 572 (NRPT…MHPA), 813 to 852 (KPKS…PVNA), and 869 to 897 (PGAP…STGS). Residues 529 to 543 (GLGGGPMFRNTGGGS) show a composition bias toward gly residues. Composition is skewed to low complexity over residues 544–555 (PAHSHGSPSRGS) and 821–830 (NSNSKPQQQQ). A compositionally biased stretch (polar residues) spans 874–897 (RLSSGNSGSDGNQANNNNSSSTGS).

It belongs to the JIP scaffold family. As to quaternary structure, forms homo- and heterooligomeric complexes. Binds the TPR motif-containing C-terminal of kinesin light chain, Klc. Pre-assembled syd scaffolding complexes are then transported as a cargo of kinesin, to the required subcellular location.

The protein localises to the cytoplasm. In terms of biological role, the JNK-interacting protein (JIP) group of scaffold proteins selectively mediates JNK-signaling by aggregating specific components of the MAPK cascade to form a functional JNK signaling module. May function as a regulator of vesicle transport, through interactions with the JNK-signaling components and motor proteins. Syd is required for efficient kinesin-I mediated axonal transport. This Drosophila pseudoobscura pseudoobscura (Fruit fly) protein is JNK-interacting protein 3.